The chain runs to 287 residues: mRNA-capping enzyme regulatory subunit OPG124 (287 aa).

This sequence belongs to the orthopoxvirus mRNA-capping enzyme regulatory subunit family. Interacts with the catalytic subunit OPG113.

The protein localises to the virion. Its function is as follows. Regulatory subunit of the mRNA cap enzyme which stabilizes the catalytic subunit and enhances its methyltransferase activity through an allosteric mechanism. Heterodimeric mRNA capping enzyme catalyzes the linkage of a N7-methyl-guanosine moiety to the first transcribed nucleotide (cap 0 structure), whereas the methyltransferase OPG102 is responsible for a second methylation at the 2'-O position of the ribose (cap 1 structure). Also involved in early viral gene transcription termination and intermediate viral gene transcription initiation. Early gene transcription termination requires the termination factor VTF, the DNA-dependent ATPase NPH-I/OPG123 and the RAP94/OPG109 subunit of the viral RNA polymerase, as well as the presence of a specific termination motif. Binds, together with RAP94/OPG109, to the termination motif 5'-UUUUUNU-3' in the nascent early mRNA. The sequence is that of mRNA-capping enzyme regulatory subunit OPG124 (OPG124) from Bos taurus (Bovine).